The following is a 64-amino-acid chain: Chassatide C7 (64 aa).

Positions 1–35 (VLVASLVMLEAQSSDTIQVPDWGKRLLMNHDSNRV) are cleaved as a propeptide — removed in mature form. 3 disulfides stabilise this stretch: cysteine 39–cysteine 55, cysteine 43–cysteine 57, and cysteine 48–cysteine 62.

In terms of tissue distribution, expressed in fruit, pedicel, root and stem but not in leaf (at protein level).

Functionally, probably participates in a plant defense mechanism. Active against E.coli ATTC25922 but not against S.aureus ATCC 12600 or S.epidermidis ATCC 14990. Has cytotoxic and hemolytic activity. This Chassalia chartacea (Chassalia curviflora) protein is Chassatide C7.